The primary structure comprises 145 residues: Ribosomal RNA large subunit methyltransferase H (145 aa).

S-adenosyl-L-methionine contacts are provided by residues glycine 94 and 113–118 (LSPLTF).

This sequence belongs to the RNA methyltransferase RlmH family. In terms of assembly, homodimer.

It localises to the cytoplasm. It carries out the reaction pseudouridine(1915) in 23S rRNA + S-adenosyl-L-methionine = N(3)-methylpseudouridine(1915) in 23S rRNA + S-adenosyl-L-homocysteine + H(+). In terms of biological role, specifically methylates the pseudouridine at position 1915 (m3Psi1915) in 23S rRNA. This Sorangium cellulosum (strain So ce56) (Polyangium cellulosum (strain So ce56)) protein is Ribosomal RNA large subunit methyltransferase H.